The sequence spans 109 residues: FK506-binding protein (109 aa).

The 89-residue stretch at 20–108 (GKEITVHYTG…IFEVELLKVY (89 aa)) folds into the PPIase FKBP-type domain.

It belongs to the FKBP-type PPIase family.

The enzyme catalyses [protein]-peptidylproline (omega=180) = [protein]-peptidylproline (omega=0). Inhibited by FK506. PPIases accelerate the folding of proteins. The protein is FK506-binding protein (fbp) of Neisseria meningitidis serogroup B (strain ATCC BAA-335 / MC58).